Reading from the N-terminus, the 743-residue chain is Phosphoribosylformylglycinamidine synthase subunit PurL (743 aa).

Histidine 50 is an active-site residue. Positions 53 and 92 each coordinate ATP. Residue glutamate 94 participates in Mg(2+) binding. Residues 95–98 and arginine 117 contribute to the substrate site; that span reads SHNH. Histidine 96 acts as the Proton acceptor in catalysis. Position 118 (aspartate 118) interacts with Mg(2+). Glutamine 241 provides a ligand contact to substrate. Mg(2+) is bound at residue aspartate 269. 313–315 lines the substrate pocket; the sequence is ESQ. Residues aspartate 495 and glycine 532 each contribute to the ATP site. Asparagine 533 contacts Mg(2+). Serine 535 is a substrate binding site.

The protein belongs to the FGAMS family. As to quaternary structure, monomer. Part of the FGAM synthase complex composed of 1 PurL, 1 PurQ and 2 PurS subunits.

It localises to the cytoplasm. It carries out the reaction N(2)-formyl-N(1)-(5-phospho-beta-D-ribosyl)glycinamide + L-glutamine + ATP + H2O = 2-formamido-N(1)-(5-O-phospho-beta-D-ribosyl)acetamidine + L-glutamate + ADP + phosphate + H(+). The protein operates within purine metabolism; IMP biosynthesis via de novo pathway; 5-amino-1-(5-phospho-D-ribosyl)imidazole from N(2)-formyl-N(1)-(5-phospho-D-ribosyl)glycinamide: step 1/2. Part of the phosphoribosylformylglycinamidine synthase complex involved in the purines biosynthetic pathway. Catalyzes the ATP-dependent conversion of formylglycinamide ribonucleotide (FGAR) and glutamine to yield formylglycinamidine ribonucleotide (FGAM) and glutamate. The FGAM synthase complex is composed of three subunits. PurQ produces an ammonia molecule by converting glutamine to glutamate. PurL transfers the ammonia molecule to FGAR to form FGAM in an ATP-dependent manner. PurS interacts with PurQ and PurL and is thought to assist in the transfer of the ammonia molecule from PurQ to PurL. The chain is Phosphoribosylformylglycinamidine synthase subunit PurL from Rhizobium etli (strain ATCC 51251 / DSM 11541 / JCM 21823 / NBRC 15573 / CFN 42).